The following is a 132-amino-acid chain: Small ribosomal subunit protein uS8 (132 aa).

The protein belongs to the universal ribosomal protein uS8 family. In terms of assembly, part of the 30S ribosomal subunit. Contacts proteins S5 and S12.

One of the primary rRNA binding proteins, it binds directly to 16S rRNA central domain where it helps coordinate assembly of the platform of the 30S subunit. This Anaeromyxobacter dehalogenans (strain 2CP-1 / ATCC BAA-258) protein is Small ribosomal subunit protein uS8.